Reading from the N-terminus, the 947-residue chain is Pyruvate, phosphate dikinase 1, chloroplastic (947 aa).

Residues 1–62 (MAASVSRAIC…GRGQHCSPLR (62 aa)) constitute a chloroplast transit peptide. The segment at 21–54 (DREATSFARRSVAAPRPPHAKAAGVIRSDSGAGR) is disordered. A63 is modified (N-acetylalanine; partial). T309 carries the post-translational modification Phosphothreonine. A Phosphoserine modification is found at S506. Phosphothreonine; by PDRP1 is present on T527. The residue at position 528 (S528) is a Phosphoserine; by PDRP1. The active-site Tele-phosphohistidine intermediate is H529. Residues R635, R692, E821, G842, T843, N844, and D845 each contribute to the substrate site. E821 contacts Mg(2+). Mg(2+) is bound at residue D845. The active-site Proton donor is the C907.

Belongs to the PEP-utilizing enzyme family. As to quaternary structure, homotetramer. Mg(2+) is required as a cofactor. In terms of processing, phosphorylation of Thr-527 in the dark inactivates the enzyme, dephosphorylation upon light stimulation reactivates the enzyme. More highly phosphorylated when grown under high rather than low light regimes (70 vs 900 umol photons/m-2/s). the degree of phosphorylation is strictly regulated by light intensity and the light/dark transition has no influence. Phosphorylated in both mesophyll and bundle sheath cells. The phosphorylation at Ser-528 may be important for the phosphorylation at Thr-527 and may also be regulated by light intensity. As to expression, isoform C4PPDKZM1 mainly localized in mesophyll cells and only a low level is found in bundle sheath cells. Isoform CYPPDKZM1 expressed in roots, stems and etiolated leaves.

It localises to the plastid. It is found in the chloroplast. The protein resides in the cytoplasm. It carries out the reaction pyruvate + phosphate + ATP = phosphoenolpyruvate + AMP + diphosphate + H(+). The protein operates within photosynthesis; C4 acid pathway. Activated by light-induced dephosphorylation. Inhibited by dark-induced phosphorylation. Both reactions are catalyzed by PDRP1. Inactivated by cold due to the dissociation of the homotetramer. Independent of circadian regulation. Its function is as follows. Formation of phosphoenolpyruvate, which is the primary acceptor of CO(2) in C4 and some Crassulacean acid metabolism plants. The sequence is that of Pyruvate, phosphate dikinase 1, chloroplastic from Zea mays (Maize).